Consider the following 1335-residue polypeptide: Mediator of RNA polymerase II transcription subunit 15a (1335 aa).

Disordered stretches follow at residues 1 to 27 (MDNNNWRPSLPNGEPAMDTGDWRTQLP), 109 to 172 (GTSI…NNNT), 190 to 225 (QDSSGQHGLSSNMFSGPQRQMLGRPHAMSSQQQQQP), 241 to 389 (FQSG…QHQQ), 401 to 448 (IQQQ…TQSN), 496 to 525 (LYSSQGQQSQNQPSQQQMMPQLQSHHQQLG), 567 to 591 (SQRTLPEMPSSSLDSTAQTESANGG), and 683 to 815 (HRPR…QSNV). 3 stretches are compositionally biased toward polar residues: residues 110-158 (TSID…TALP), 190-207 (QDSSGQHGLSSNMFSGPQ), and 241-257 (FQSGNVPNPNSLLPSHI). Positions 258 to 270 (QQQQQNVLQPNQL) are enriched in low complexity. Positions 271 to 299 (HSSQQPGVPTSATQPSTVNSAPLQGLHTN) are enriched in polar residues. Positions 300-314 (QQSSPQLSSQQTTQS) are enriched in low complexity. Polar residues predominate over residues 315 to 328 (MLRQHQSSMLRQHP). Positions 329-362 (QSQQASGIHQQQSSLPQQSISPLQQQPTQLMRQQ) are enriched in low complexity. The segment covering 363–374 (AANSSGIQQKQM) has biased composition (polar residues). The segment covering 401 to 436 (IQQQQSQQQPLQQPQQQQKQQPPAQQQLMSQQNSLQ) has biased composition (low complexity). Residues 437 to 448 (ATHQNPLGTQSN) show a composition bias toward polar residues. Residues 498–525 (SSQGQQSQNQPSQQQMMPQLQSHHQQLG) show a composition bias toward low complexity. Positions 567 to 588 (SQRTLPEMPSSSLDSTAQTESA) are enriched in polar residues. Over residues 688-712 (PVQQGQLPQSQMQPMQQPQSQTVQD) the composition is skewed to low complexity. Polar residues-rich tracts occupy residues 716–728 (DNQTNPQMQSMSM), 735–749 (AQQSSMTNMQSNVLS), and 756–815 (APQQ…QSNV). Residues 834 to 882 (QDQQMQLKQQFQQRQMQQQQLQARQQQQQQQLQARQQAAQLQQMNDMND) adopt a coiled-coil conformation. 2 disordered regions span residues 947–986 (KMGTPLQPANSPFVVPSPSSTPLAPSPMQVDSEKPGSSSL) and 1146–1165 (FAGSETSDLESTATSDGKKA). Residues 957 to 973 (SPFVVPSPSSTPLAPSP) show a composition bias toward low complexity. Residues 1148 to 1160 (GSETSDLESTATS) show a composition bias toward polar residues.

This sequence belongs to the plant Mediator complex subunit 15 family. In terms of assembly, component of the Mediator complex.

Its subcellular location is the nucleus. Component of the Mediator complex, a coactivator involved in the regulated transcription of nearly all RNA polymerase II-dependent genes. Mediator functions as a bridge to convey information from gene-specific regulatory proteins to the basal RNA polymerase II transcription machinery. The Mediator complex, having a compact conformation in its free form, is recruited to promoters by direct interactions with regulatory proteins and serves for the assembly of a functional preinitiation complex with RNA polymerase II and the general transcription factors. This Arabidopsis thaliana (Mouse-ear cress) protein is Mediator of RNA polymerase II transcription subunit 15a (MED15A).